The following is a 327-amino-acid chain: ATPase GET3 (327 aa).

27–34 (KGGVGKTT) serves as a coordination point for ATP. Residue Asp-56 is part of the active site. Residues Glu-231 and Asn-258 each coordinate ATP. Zn(2+) contacts are provided by Cys-269 and Cys-272.

This sequence belongs to the arsA ATPase family. In terms of assembly, homodimer. Component of the Golgi to ER traffic (GET) complex, which is composed of GET1, GET2 and GET3. Within the complex, GET1 and GET2 form a heterotetramer which is stabilized by phosphatidylinositol binding and which binds to the GET3 homodimer. Interacts with the chloride channel protein GEF1.

Its subcellular location is the cytoplasm. It is found in the endoplasmic reticulum. The protein localises to the golgi apparatus. Its function is as follows. ATPase required for the post-translational delivery of tail-anchored (TA) proteins to the endoplasmic reticulum. Recognizes and selectively binds the transmembrane domain of TA proteins in the cytosol. This complex then targets to the endoplasmic reticulum by membrane-bound receptors GET1 and GET2, where the tail-anchored protein is released for insertion. This process is regulated by ATP binding and hydrolysis. ATP binding drives the homodimer towards the closed dimer state, facilitating recognition of newly synthesized TA membrane proteins. ATP hydrolysis is required for insertion. Subsequently, the homodimer reverts towards the open dimer state, lowering its affinity for the GET1-GET2 receptor, and returning it to the cytosol to initiate a new round of targeting. Cooperates with the HDEL receptor ERD2 to mediate the ATP-dependent retrieval of resident ER proteins that contain a C-terminal H-D-E-L retention signal from the Golgi to the ER. Involved in low-level resistance to the oxyanions arsenite and arsenate, and in heat tolerance. This chain is ATPase GET3, found in Yarrowia lipolytica (strain CLIB 122 / E 150) (Yeast).